Reading from the N-terminus, the 349-residue chain is MALTVDVAGPAPWGFRISGGRDFHTPIIVTKVTERGKAEAADLRPGDIIVAINGQSAENMLHAEAQSKIRQSASPLRLQLDRSQTASPGQTNGEGSLEVLATRFQGSLRTHRDSQSSQRSACFSPVSLSPRPCSPFSTPPPTSPVALSKEDMIGCSFQSLTHSPGLAAAHHLTYPGHPTSQQAGHSSPSDSAVRVLLHSPGRPSSPRFSSLDLEEDSEVFKMLQENRQGRAAPRQSSSFRLLQEALEAEERGGTPAFVPSSLSSQASLPTSRALATPPKLHTCEKCSVNISNQAVRIQEGRYRHPGCYTCADCGLNLKMRGHFWVGNELYCEKHARQRYSMPGTLNSRA.

Residues 1 to 84 (MALTVDVAGP…PLRLQLDRSQ (84 aa)) enclose the PDZ domain. The segment at 74 to 147 (SPLRLQLDRS…TPPPTSPVAL (74 aa)) is disordered. A compositionally biased stretch (polar residues) spans 81–94 (DRSQTASPGQTNGE). Phosphoserine occurs at positions 124, 127, 129, 134, and 137. Phosphothreonine is present on residues threonine 138 and threonine 142. 2 positions are modified to phosphoserine: serine 143 and serine 163. Positions 169 to 212 (AHHLTYPGHPTSQQAGHSSPSDSAVRVLLHSPGRPSSPRFSSLD) are disordered. Residues 178-190 (PTSQQAGHSSPSD) show a composition bias toward polar residues. A phosphoserine mark is found at serine 199, serine 204, serine 205, serine 209, serine 210, and serine 263. The span at 199-210 (SPGRPSSPRFSS) shows a compositional bias: low complexity. Residues 281–341 (HTCEKCSVNI…EKHARQRYSM (61 aa)) form the LIM zinc-binding domain.

Interacts with alpha-actinins ACTN1 and ACTN4, FLNA and MYH9. Interacts (via LIM zinc-binding domain) with MKRN2. As to expression, highly expressed in lung. Expressed at intermediate level in kidney, testis and spleen. Weakly expressed in heart and brain.

It localises to the cytoplasm. It is found in the cytoskeleton. Its function is as follows. Probable adapter protein located at the actin cytoskeleton that promotes cell attachment. Necessary for the migratory capacity of epithelial cells. Overexpression enhances cell adhesion to collagen and fibronectin and suppresses anchorage independent growth. May contribute to tumor cell migratory capacity. This Mus musculus (Mouse) protein is PDZ and LIM domain protein 2 (Pdlim2).